Consider the following 502-residue polypeptide: Inosine-5'-monophosphate dehydrogenase 2 (502 aa).

At serine 2 the chain carries N-acetylserine. Residues 166–225 (MKSCENKDYYVPWDIDLDKIEAVLEDKQKGFVVLEKEGETVNVVTKDDVERVKGYPKLGS) enclose the CBS domain. Residues 264–266 (DSS) and 314–316 (GMG) each bind NAD(+). 2 residues coordinate K(+): glycine 316 and glycine 318. Serine 319 is an IMP binding site. Cysteine 321 is a K(+) binding site. Cysteine 321 serves as the catalytic Thioimidate intermediate. Residues 354–356 (DGG), 377–378 (GS), and 401–405 (YRGMG) each bind IMP. Arginine 417 (proton acceptor) is an active-site residue. Glutamine 429 serves as a coordination point for IMP. K(+) contacts are provided by glutamate 488, glycine 489, and glycine 490.

Belongs to the IMPDH/GMPR family. In terms of assembly, homotetramer. The cofactor is K(+).

The protein localises to the cytoplasm. It catalyses the reaction IMP + NAD(+) + H2O = XMP + NADH + H(+). Its pathway is purine metabolism; XMP biosynthesis via de novo pathway; XMP from IMP: step 1/1. Its activity is regulated as follows. Mycophenolic acid (MPA) is a non-competitive inhibitor that prevents formation of the closed enzyme conformation by binding to the same site as the amobile flap. In contrast, mizoribine monophosphate (MZP) is a competitive inhibitor that induces the closed conformation. MPA is a potent inhibitor of mammalian IMPDHs but a poor inhibitor of the bacterial enzymes. MZP is a more potent inhibitor of bacterial IMPDH. Functionally, catalyzes the conversion of inosine 5'-phosphate (IMP) to xanthosine 5'-phosphate (XMP), the first committed and rate-limiting step in the de novo synthesis of guanine nucleotides, and therefore plays an important role in the regulation of cell growth. This chain is Inosine-5'-monophosphate dehydrogenase 2, found in Arabidopsis thaliana (Mouse-ear cress).